We begin with the raw amino-acid sequence, 505 residues long: Cell division control protein 6 homolog B (505 aa).

The interval 37-72 is disordered; the sequence is KRKMRSDSAAVSGNSVSTPKKLKSHLPSSVPNPGMS. Residues 45 to 54 are compositionally biased toward polar residues; sequence AAVSGNSVST.

The protein belongs to the CDC6/cdc18 family.

Its subcellular location is the nucleus. Functionally, may be involved in the initiation of DNA replication. The chain is Cell division control protein 6 homolog B from Arabidopsis thaliana (Mouse-ear cress).